A 951-amino-acid polypeptide reads, in one-letter code: 2-oxoglutarate dehydrogenase E1 component (951 aa).

Residues 906-925 form a disordered region; it reads RRRRSSPAEGNPTAHKQEQA.

It belongs to the alpha-ketoglutarate dehydrogenase family. As to quaternary structure, homodimer. Part of the 2-oxoglutarate dehydrogenase (OGDH) complex composed of E1 (2-oxoglutarate dehydrogenase), E2 (dihydrolipoamide succinyltransferase) and E3 (dihydrolipoamide dehydrogenase); the complex contains multiple copies of the three enzymatic components (E1, E2 and E3). Requires thiamine diphosphate as cofactor.

It catalyses the reaction N(6)-[(R)-lipoyl]-L-lysyl-[protein] + 2-oxoglutarate + H(+) = N(6)-[(R)-S(8)-succinyldihydrolipoyl]-L-lysyl-[protein] + CO2. Functionally, E1 component of the 2-oxoglutarate dehydrogenase (OGDH) complex which catalyzes the decarboxylation of 2-oxoglutarate, the first step in the conversion of 2-oxoglutarate to succinyl-CoA and CO(2). This is 2-oxoglutarate dehydrogenase E1 component from Exiguobacterium sp. (strain ATCC BAA-1283 / AT1b).